Here is a 444-residue protein sequence, read N- to C-terminus: Elongation factor 1-alpha (444 aa).

A tr-type G domain is found at 15–236 (KPHINLAVVG…VLDTFQPPPR (222 aa)). Residues 24 to 31 (GHVDNGKS) form a G1 region. 24–31 (GHVDNGKS) serves as a coordination point for GTP. Position 31 (Ser31) interacts with Mg(2+). The G2 stretch occupies residues 80 to 84 (GVTIE). A G3 region spans residues 101–104 (DLPG). GTP-binding positions include 101–105 (DLPGH) and 163–166 (NKMD). The G4 stretch occupies residues 163–166 (NKMD). Positions 202-204 (SAV) are G5.

It belongs to the TRAFAC class translation factor GTPase superfamily. Classic translation factor GTPase family. EF-Tu/EF-1A subfamily.

The protein localises to the cytoplasm. The enzyme catalyses GTP + H2O = GDP + phosphate + H(+). Functionally, GTP hydrolase that promotes the GTP-dependent binding of aminoacyl-tRNA to the A-site of ribosomes during protein biosynthesis. This Pyrobaculum arsenaticum (strain DSM 13514 / JCM 11321 / PZ6) protein is Elongation factor 1-alpha.